We begin with the raw amino-acid sequence, 166 residues long: Thioredoxin, mitochondrial (166 aa).

The N-terminal 59 residues, 1 to 59 (MAQRLLLRRFLTSIISGKPSQSRWAPVASRALQTPQYSPGYLTVTPSQARSIYTTRVCS), are a transit peptide targeting the mitochondrion. One can recognise a Thioredoxin domain in the interval 61–166 (TFNIQDGPDF…LEAFLKKLIG (106 aa)). Active-site nucleophile residues include Cys90 and Cys93. The cysteines at positions 90 and 93 are disulfide-linked. At Lys152 the chain carries N6-acetyllysine; alternate. At Lys152 the chain carries N6-succinyllysine; alternate.

It belongs to the thioredoxin family. Monomer.

The protein resides in the mitochondrion. Functionally, important for the control of mitochondrial reactive oxygen species homeostasis, apoptosis regulation and cell viability. Is involved in various redox reactions including the reduction of protein disulfide bonds, through the reversible oxidation of its active center dithiol to a disulfide. This is Thioredoxin, mitochondrial (TXN2) from Bos taurus (Bovine).